Here is a 310-residue protein sequence, read N- to C-terminus: Glucan endo-1,3-beta-glucosidase GI (310 aa).

The active-site Proton donor is Glu96. Glu234 functions as the Nucleophile in the catalytic mechanism.

This sequence belongs to the glycosyl hydrolase 17 family. Monomer. Young leaves and roots.

It catalyses the reaction Hydrolysis of (1-&gt;3)-beta-D-glucosidic linkages in (1-&gt;3)-beta-D-glucans.. In terms of biological role, may provide a degree of protection against microbial invasion of germinated barley grain through its ability to degrade fungal cell wall polysaccharides. Does not hydrolyze (1,3;1,4)-beta-D-glucans, (1,6)-beta-D-glucan, CM-cellulose, insoluble (1,3)-beta-D-glucans or aryl beta-D-glycosides. The sequence is that of Glucan endo-1,3-beta-glucosidase GI from Hordeum vulgare (Barley).